Consider the following 191-residue polypeptide: GTP cyclohydrolase 1 (191 aa).

Residues Cys-80, His-83, and Cys-151 each contribute to the Zn(2+) site.

The protein belongs to the GTP cyclohydrolase I family. In terms of assembly, toroid-shaped homodecamer, composed of two pentamers of five dimers.

The catalysed reaction is GTP + H2O = 7,8-dihydroneopterin 3'-triphosphate + formate + H(+). It participates in cofactor biosynthesis; 7,8-dihydroneopterin triphosphate biosynthesis; 7,8-dihydroneopterin triphosphate from GTP: step 1/1. The chain is GTP cyclohydrolase 1 from Leifsonia xyli subsp. xyli (strain CTCB07).